Here is a 599-residue protein sequence, read N- to C-terminus: Elongation factor 4 (599 aa).

The tr-type G domain occupies 2–184 (KNIRNFSIIA…RLVRDIPPPQ (183 aa)). GTP contacts are provided by residues 14 to 19 (DHGKST) and 131 to 134 (NKID).

The protein belongs to the TRAFAC class translation factor GTPase superfamily. Classic translation factor GTPase family. LepA subfamily.

The protein localises to the cell inner membrane. The catalysed reaction is GTP + H2O = GDP + phosphate + H(+). In terms of biological role, required for accurate and efficient protein synthesis under certain stress conditions. May act as a fidelity factor of the translation reaction, by catalyzing a one-codon backward translocation of tRNAs on improperly translocated ribosomes. Back-translocation proceeds from a post-translocation (POST) complex to a pre-translocation (PRE) complex, thus giving elongation factor G a second chance to translocate the tRNAs correctly. Binds to ribosomes in a GTP-dependent manner. In Salmonella arizonae (strain ATCC BAA-731 / CDC346-86 / RSK2980), this protein is Elongation factor 4.